The following is a 558-amino-acid chain: Protein NRT1/ PTR FAMILY 2.3 (558 aa).

Helical transmembrane passes span 33 to 53, 69 to 89, 92 to 112, 128 to 148, 176 to 196, 203 to 223, 329 to 349, 371 to 391, 403 to 423, 439 to 459, 478 to 498, and 517 to 537; these read TLLGLSVTSFGWVMNLIVFLI, VANGCLSMLPVVAAILADSFF, IPVIAASSFISLLGIVLLTLI, VLCTPPSKLHLGILYTALALV, FFNWYFLTLYAGAITGATAIV, SWKLGFGLCAAANLISFIVFV, LWLSIIFVSTPMVMQTSLIVL, VIIIITACIVIIMNNWLVFPM, LQKVGIGQVLTILSMALSAVV, VLWLFPPLVIVGIGEAFQFPA, SLTSVVIGISFYLSTALIDLI, and VYWLLVIGGILNFGYFLVCSW.

The protein belongs to the major facilitator superfamily. Proton-dependent oligopeptide transporter (POT/PTR) (TC 2.A.17) family. Expressed in flowers, siliques and root epidermis or cortex. Detected in shoots.

The protein resides in the membrane. Its function is as follows. Transporter involved in a passive nitrate efflux. The sequence is that of Protein NRT1/ PTR FAMILY 2.3 (NPF2.3) from Arabidopsis thaliana (Mouse-ear cress).